The following is a 151-amino-acid chain: Small ribosomal subunit protein uS19 (151 aa).

It belongs to the universal ribosomal protein uS19 family.

Functionally, protein S19 forms a complex with S13 that binds strongly to the 16S ribosomal RNA. This chain is Small ribosomal subunit protein uS19 (rps19), found in Thermoplasma acidophilum (strain ATCC 25905 / DSM 1728 / JCM 9062 / NBRC 15155 / AMRC-C165).